Consider the following 104-residue polypeptide: Thioredoxin (104 aa).

Residues 2 to 104 enclose the Thioredoxin domain; the sequence is AIVKVTDSNF…NLAEVLDKHL (103 aa). Cysteines 29 and 32 form a disulfide.

The protein belongs to the thioredoxin family.

In terms of biological role, component of the thioredoxin-thioredoxin reductase system. Participates in various redox reactions through the reversible oxidation of its active center dithiol to a disulfide and catalyzes dithiol-disulfide exchange reactions. This chain is Thioredoxin (trxA), found in Staphylococcus haemolyticus (strain JCSC1435).